The chain runs to 511 residues: 2-isopropylmalate synthase (511 aa).

The Pyruvate carboxyltransferase domain maps to 5–267 (LFIFDTTLRD…DTRIDATQIV (263 aa)). Residues aspartate 14, histidine 202, histidine 204, and asparagine 238 each contribute to the Mn(2+) site. The interval 393-511 (KLLSMKVCSE…SKRERAHPQV (119 aa)) is regulatory domain.

It belongs to the alpha-IPM synthase/homocitrate synthase family. LeuA type 1 subfamily. Homodimer. Mn(2+) serves as cofactor.

Its subcellular location is the cytoplasm. It catalyses the reaction 3-methyl-2-oxobutanoate + acetyl-CoA + H2O = (2S)-2-isopropylmalate + CoA + H(+). The protein operates within amino-acid biosynthesis; L-leucine biosynthesis; L-leucine from 3-methyl-2-oxobutanoate: step 1/4. Functionally, catalyzes the condensation of the acetyl group of acetyl-CoA with 3-methyl-2-oxobutanoate (2-ketoisovalerate) to form 3-carboxy-3-hydroxy-4-methylpentanoate (2-isopropylmalate). The chain is 2-isopropylmalate synthase from Thiobacillus denitrificans (strain ATCC 25259 / T1).